We begin with the raw amino-acid sequence, 127 residues long: Large ribosomal subunit protein bL17 (127 aa).

It belongs to the bacterial ribosomal protein bL17 family. In terms of assembly, part of the 50S ribosomal subunit. Contacts protein L32.

In Xanthomonas campestris pv. campestris (strain 8004), this protein is Large ribosomal subunit protein bL17.